The sequence spans 172 residues: Ribosome maturation factor RimM (172 aa).

Positions 95–168 (AEGEFYYHQI…RVDVEIMEGL (74 aa)) constitute a PRC barrel domain.

This sequence belongs to the RimM family. Binds ribosomal protein uS19.

Its subcellular location is the cytoplasm. In terms of biological role, an accessory protein needed during the final step in the assembly of 30S ribosomal subunit, possibly for assembly of the head region. Essential for efficient processing of 16S rRNA. May be needed both before and after RbfA during the maturation of 16S rRNA. It has affinity for free ribosomal 30S subunits but not for 70S ribosomes. In Streptococcus equi subsp. zooepidemicus (strain H70), this protein is Ribosome maturation factor RimM.